Here is a 211-residue protein sequence, read N- to C-terminus: Cytochrome c biogenesis ATP-binding export protein CcmA (211 aa).

Positions 1 to 211 (MAIHNLACVR…RMAEATSCFG (211 aa)) constitute an ABC transporter domain. 33 to 40 (GSNGAGKT) lines the ATP pocket.

Belongs to the ABC transporter superfamily. CcmA exporter (TC 3.A.1.107) family. As to quaternary structure, the complex is composed of two ATP-binding proteins (CcmA) and two transmembrane proteins (CcmB).

The protein resides in the cell inner membrane. The enzyme catalyses heme b(in) + ATP + H2O = heme b(out) + ADP + phosphate + H(+). Part of the ABC transporter complex CcmAB involved in the biogenesis of c-type cytochromes; once thought to export heme, this seems not to be the case, but its exact role is uncertain. Responsible for energy coupling to the transport system. The chain is Cytochrome c biogenesis ATP-binding export protein CcmA from Sodalis glossinidius (strain morsitans).